Consider the following 189-residue polypeptide: Interleukin-23 subunit alpha (189 aa).

A signal peptide spans 1 to 19; that stretch reads MLGSRAVMLLLLLPWTAQG. C77 and C89 form a disulfide bridge.

Belongs to the IL-6 superfamily. As to quaternary structure, heterodimer with IL12B; disulfide-linked. The heterodimer is known as interleukin IL-23. Interacts with IL23R; this interaction enables recruitment of IL12RB1. In terms of tissue distribution, secreted by activated dendritic and phagocytic cells and keratinocytes. Also expressed by dermal Langerhans cells (at protein level).

The protein resides in the secreted. Associates with IL12B to form the pro-inflammatory cytokine IL-23 that plays different roles in innate and adaptive immunity. Released by antigen-presenting cells such as dendritic cells or macrophages, binds to a heterodimeric receptor complex composed of IL12RB1 and IL23R to activate JAK2 and TYK2 which then phosphorylate the receptor to form a docking site leading to the phosphorylation of STAT3 and STAT4. This process leads to activation of several pathways including p38 MAPK or NF-kappa-B and promotes the production of pro-inflammatory cytokines such as interleukin-17A/IL17A. In turn, participates in the early and effective intracellular bacterial clearance. Promotes the expansion and survival of T-helper 17 cells, a CD4-positive helper T-cell subset that produces IL-17, as well as other IL-17-producing cells. The sequence is that of Interleukin-23 subunit alpha (IL23A) from Homo sapiens (Human).